The following is a 982-amino-acid chain: E3 ubiquitin-protein ligase CBL-B (982 aa).

Over residues 1–14 (MASSSSSSSSTNSS) the composition is skewed to low complexity. The tract at residues 1 to 25 (MASSSSSSSSTNSSAVTGRLPGARS) is disordered. The 4H stretch occupies residues 46–178 (PPKQAAADRR…KAIFPSGQFQ (133 aa)). One can recognise a Cbl-PTB domain in the interval 46–354 (PPKQAAADRR…GRSYNPDLTD (309 aa)). The segment at 179–251 (GDNFRITKAD…FEFDIFTRLF (73 aa)) is EF-hand-like. Ca(2+) contacts are provided by D232, T234, N236, Y238, and E243. The tract at residues 252–354 (QPWTSILRNW…GRSYNPDLTD (103 aa)) is SH2-like. R297 lines the 4-O-phospho-L-tyrosine pocket. Residues 355 to 383 (LCEPTPHDHIKVTQEQYELYCEMGSTFQL) form a linker region. The RING-type zinc finger occupies 384 to 423 (CKICAENDKDVKIEPCGHLMCTSCLTSWQESDGQGCPFCR). Disordered stretches follow at residues 480–582 (MNER…RTCR), 709–728 (VRNSAEEDDSEYKIPSSHPV), and 766–911 (LKQP…PVPR). Residues 483 to 497 (RQNSPVTSPGSSPLS) are compositionally biased toward polar residues. Pro residues predominate over residues 554 to 576 (LPAPPPPLREPPPPPERPPPIPP). The segment covering 825–834 (PSQPPPPPPA) has biased composition (pro residues). One can recognise a UBA domain in the interval 927–970 (SLAENVDAKIAKLMGEGFPFEEVKRALEIAQNNVDVARSILREF).

As to quaternary structure, interacts with several SH3 domain-containing proteins and with poly-ubiquitinated proteins.

The protein resides in the cytoplasm. It catalyses the reaction S-ubiquitinyl-[E2 ubiquitin-conjugating enzyme]-L-cysteine + [acceptor protein]-L-lysine = [E2 ubiquitin-conjugating enzyme]-L-cysteine + N(6)-ubiquitinyl-[acceptor protein]-L-lysine.. It participates in protein modification; protein ubiquitination. E3 ubiquitin-protein ligase which accepts ubiquitin from specific E2 ubiquitin-conjugating enzymes, and transfers it to substrates, generally promoting their degradation by the proteasome. This Xenopus tropicalis (Western clawed frog) protein is E3 ubiquitin-protein ligase CBL-B (cblb).